The sequence spans 371 residues: Cytochrome b (371 aa).

A run of 4 helical transmembrane segments spans residues 25–45 (FGSM…FLAI), 69–90 (WIMQ…YTHI), 105–125 (WLSG…GYVL), and 170–190 (FFAL…IHII). The heme b site is built by His75 and His89. Residues His174 and His188 each coordinate heme b. His193 lines the a ubiquinone pocket. The next 4 helical transmembrane spans lie at 218 to 238 (YKDT…LSFT), 280 to 300 (LGGT…PFTH), 312 to 332 (LAQT…WTAS), and 339 to 358 (FIII…IMNP).

It belongs to the cytochrome b family. The cytochrome bc1 complex contains 3 respiratory subunits (MT-CYB, CYC1 and UQCRFS1), 2 core proteins (UQCRC1 and UQCRC2) and probably 6 low-molecular weight proteins. Requires heme b as cofactor.

The protein localises to the mitochondrion inner membrane. In terms of biological role, component of the ubiquinol-cytochrome c reductase complex (complex III or cytochrome b-c1 complex) that is part of the mitochondrial respiratory chain. The b-c1 complex mediates electron transfer from ubiquinol to cytochrome c. Contributes to the generation of a proton gradient across the mitochondrial membrane that is then used for ATP synthesis. This chain is Cytochrome b (MT-CYB), found in Sinomicrurus macclellandi (Macclelland's coral snake).